Reading from the N-terminus, the 153-residue chain is UPF0756 membrane protein lmo1568 (153 aa).

The next 4 membrane-spanning stretches (helical) occupy residues 6–26, 54–74, 80–100, and 117–137; these read MLFL…SLII, WGVT…QIGF, SFKS…SILA, and LVFG…GPVI.

The protein belongs to the UPF0756 family.

The protein localises to the cell membrane. This Listeria monocytogenes serovar 1/2a (strain ATCC BAA-679 / EGD-e) protein is UPF0756 membrane protein lmo1568.